The sequence spans 136 residues: Large ribosomal subunit protein eL27 (136 aa).

One can recognise a KOW domain in the interval 5–36 (MKPGKVVLVLRGKYAGRKAVVVKQQDEGVSDR).

The protein belongs to the eukaryotic ribosomal protein eL27 family. In terms of assembly, component of the large ribosomal subunit.

The protein resides in the cytoplasm. Its subcellular location is the cytosol. It localises to the rough endoplasmic reticulum. In terms of biological role, component of the large ribosomal subunit. In Caenorhabditis elegans, this protein is Large ribosomal subunit protein eL27 (rpl-27).